The following is a 644-amino-acid chain: Exoribonuclease 2 (644 aa).

One can recognise an RNB domain in the interval 189–516 (RKDLTALDFV…NHRLLKAVIK (328 aa)). Residues 561–643 (DTRFAAEIVD…ETRSIIARPV (83 aa)) form the S1 motif domain.

The protein belongs to the RNR ribonuclease family. RNase II subfamily.

The protein resides in the cytoplasm. It catalyses the reaction Exonucleolytic cleavage in the 3'- to 5'-direction to yield nucleoside 5'-phosphates.. Its function is as follows. Involved in mRNA degradation. Hydrolyzes single-stranded polyribonucleotides processively in the 3' to 5' direction. The sequence is that of Exoribonuclease 2 from Escherichia coli O157:H7.